Reading from the N-terminus, the 55-residue chain is Sec-independent protein translocase protein TatA (55 aa).

The helical transmembrane segment at 1 to 21 threads the bilayer; it reads MFGELGVPEVLFILGIALLIF.

Belongs to the TatA/E family. Forms a complex with TatC.

The protein localises to the cell inner membrane. Part of the twin-arginine translocation (Tat) system that transports large folded proteins containing a characteristic twin-arginine motif in their signal peptide across membranes. TatA could form the protein-conducting channel of the Tat system. This chain is Sec-independent protein translocase protein TatA, found in Koribacter versatilis (strain Ellin345).